Consider the following 344-residue polypeptide: Phosphoribosylformylglycinamidine cyclo-ligase (344 aa).

Belongs to the AIR synthase family.

The protein resides in the cytoplasm. The catalysed reaction is 2-formamido-N(1)-(5-O-phospho-beta-D-ribosyl)acetamidine + ATP = 5-amino-1-(5-phospho-beta-D-ribosyl)imidazole + ADP + phosphate + H(+). It participates in purine metabolism; IMP biosynthesis via de novo pathway; 5-amino-1-(5-phospho-D-ribosyl)imidazole from N(2)-formyl-N(1)-(5-phospho-D-ribosyl)glycinamide: step 2/2. The protein is Phosphoribosylformylglycinamidine cyclo-ligase of Synechococcus sp. (strain RCC307).